The sequence spans 309 residues: Uricase-2 isozyme 1 (309 aa).

Active-site charge relay system residues include lysine 18 and threonine 64. 7 residues coordinate urate: threonine 64, aspartate 65, phenylalanine 166, arginine 183, valine 238, glutamine 239, and asparagine 265. The Charge relay system role is filled by histidine 267. A Microbody targeting signal motif is present at residues 307-309 (SKL).

Belongs to the uricase family. In terms of assembly, homotetramer. Post-translationally, the N-terminus is blocked. Expressed predominantly in the uninfected cells of the central tissue of the root nodule.

Its subcellular location is the peroxisome. The catalysed reaction is urate + O2 + H2O = 5-hydroxyisourate + H2O2. The protein operates within purine metabolism; urate degradation; (S)-allantoin from urate: step 1/3. In terms of biological role, catalyzes the oxidation of uric acid to 5-hydroxyisourate, which is further processed to form (S)-allantoin. The chain is Uricase-2 isozyme 1 from Glycine max (Soybean).